The primary structure comprises 204 residues: dITP/XTP pyrophosphatase (204 aa).

14–19 (THNKGK) is a binding site for substrate. Residues glutamate 46 and aspartate 75 each contribute to the Mg(2+) site. The Proton acceptor role is filled by aspartate 75. Residues serine 76, 161 to 164 (FGYD), lysine 184, and 189 to 190 (HR) each bind substrate.

It belongs to the HAM1 NTPase family. In terms of assembly, homodimer. Requires Mg(2+) as cofactor.

The enzyme catalyses XTP + H2O = XMP + diphosphate + H(+). It catalyses the reaction dITP + H2O = dIMP + diphosphate + H(+). The catalysed reaction is ITP + H2O = IMP + diphosphate + H(+). In terms of biological role, pyrophosphatase that catalyzes the hydrolysis of nucleoside triphosphates to their monophosphate derivatives, with a high preference for the non-canonical purine nucleotides XTP (xanthosine triphosphate), dITP (deoxyinosine triphosphate) and ITP. Seems to function as a house-cleaning enzyme that removes non-canonical purine nucleotides from the nucleotide pool, thus preventing their incorporation into DNA/RNA and avoiding chromosomal lesions. This is dITP/XTP pyrophosphatase from Ruegeria pomeroyi (strain ATCC 700808 / DSM 15171 / DSS-3) (Silicibacter pomeroyi).